We begin with the raw amino-acid sequence, 113 residues long: Cell division protein FtsB (113 aa).

Over 1–3 the chain is Cytoplasmic; that stretch reads MRL. The helical transmembrane segment at 4-21 threads the bilayer; that stretch reads ISLLLFVLLLAIQYPLWL. Residues 22–113 lie on the Periplasmic side of the membrane; sequence GKGGWLRVWD…PNSVAGRGGH (92 aa). The stretch at 34–64 forms a coiled coil; the sequence is RQVNEQTVHNQALKLRNAKLEGEVKDLQDGT. A disordered region spans residues 93-113; it reads KVSATPPLPPPPNSVAGRGGH.

It belongs to the FtsB family. In terms of assembly, part of a complex composed of FtsB, FtsL and FtsQ.

The protein resides in the cell inner membrane. Functionally, essential cell division protein. May link together the upstream cell division proteins, which are predominantly cytoplasmic, with the downstream cell division proteins, which are predominantly periplasmic. The sequence is that of Cell division protein FtsB from Cupriavidus metallidurans (strain ATCC 43123 / DSM 2839 / NBRC 102507 / CH34) (Ralstonia metallidurans).